The primary structure comprises 151 residues: MTDNLTRAFKELLNQERFGSQSEIVDALKKQGFTGINQSKISRMLSKFGAVRTRNTKMEMVYCLPNELSVPNTSSPLKNLVLDVDHNAMLIVIKTTPGAAQLIARLLDSIGKSEGILGTIAGDDTIFVTPTNDKPIDELLQNIQRLFENTL.

Belongs to the ArgR family.

Its subcellular location is the cytoplasm. The protein operates within amino-acid biosynthesis; L-arginine biosynthesis [regulation]. Regulates arginine biosynthesis genes. In Haemophilus influenzae (strain PittGG), this protein is Arginine repressor.